Reading from the N-terminus, the 457-residue chain is Methylenetetrahydrofolate--tRNA-(uracil-5-)-methyltransferase TrmFO (457 aa).

8 to 13 contributes to the FAD binding site; that stretch reads GGGLAG.

Belongs to the MnmG family. TrmFO subfamily. FAD serves as cofactor.

It is found in the cytoplasm. The catalysed reaction is uridine(54) in tRNA + (6R)-5,10-methylene-5,6,7,8-tetrahydrofolate + NADH + H(+) = 5-methyluridine(54) in tRNA + (6S)-5,6,7,8-tetrahydrofolate + NAD(+). The enzyme catalyses uridine(54) in tRNA + (6R)-5,10-methylene-5,6,7,8-tetrahydrofolate + NADPH + H(+) = 5-methyluridine(54) in tRNA + (6S)-5,6,7,8-tetrahydrofolate + NADP(+). Functionally, catalyzes the folate-dependent formation of 5-methyl-uridine at position 54 (M-5-U54) in all tRNAs. The sequence is that of Methylenetetrahydrofolate--tRNA-(uracil-5-)-methyltransferase TrmFO from Thermosynechococcus vestitus (strain NIES-2133 / IAM M-273 / BP-1).